The primary structure comprises 1589 residues: Pentafunctional AROM polypeptide (1589 aa).

A 3-dehydroquinate synthase region spans residues 1–392; sequence MVKFEKVPIL…YGKSAHYVND (392 aa). NAD(+) is bound by residues 43-45, 78-81, 109-111, and D114; these read DTN, EANK, and GGI. Residue R125 participates in 7-phospho-2-dehydro-3-deoxy-D-arabino-heptonate binding. An NAD(+)-binding site is contributed by 134–135; sequence TS. 7-phospho-2-dehydro-3-deoxy-D-arabino-heptonate-binding residues include D141 and K147. Residue K156 participates in NAD(+) binding. N157 serves as a coordination point for 7-phospho-2-dehydro-3-deoxy-D-arabino-heptonate. Residues 174-177 and N185 each bind NAD(+); that span reads WLET. E189 is a binding site for Zn(2+). Residues 189 to 192 and K258 each bind 7-phospho-2-dehydro-3-deoxy-D-arabino-heptonate; that span reads EVIK. E268 functions as the Proton acceptor; for 3-dehydroquinate synthase activity in the catalytic mechanism. Residues 272–276 and H279 contribute to the 7-phospho-2-dehydro-3-deoxy-D-arabino-heptonate site; that span reads RNLLN. H279 provides a ligand contact to Zn(2+). Residue H283 is the Proton acceptor; for 3-dehydroquinate synthase activity of the active site. The 7-phospho-2-dehydro-3-deoxy-D-arabino-heptonate site is built by H295 and K364. Residue H295 participates in Zn(2+) binding. The interval 405 to 872 is EPSP synthase; it reads VYPFSNIPQE…WDVLHTELGA (468 aa). The active-site For EPSP synthase activity is C854. Residues 891 to 1081 form a shikimate kinase region; sequence SVVLIGMRAA…VPNKRSAFVC (191 aa). 896-903 lines the ATP pocket; it reads GMRAAGKS. A 3-dehydroquinase region spans residues 1082 to 1294; sequence LTFGDLTEKA…SAPGQLTLAQ (213 aa). Residue H1199 is the Proton acceptor; for 3-dehydroquinate dehydratase activity of the active site. The Schiff-base intermediate with substrate; for 3-dehydroquinate dehydratase activity role is filled by K1228. Positions 1307–1589 are shikimate dehydrogenase; the sequence is SKKFFVVGNP…QEIFNAVTRD (283 aa).

In the N-terminal section; belongs to the sugar phosphate cyclases superfamily. Dehydroquinate synthase family. The protein in the 2nd section; belongs to the EPSP synthase family. It in the 3rd section; belongs to the shikimate kinase family. This sequence in the 4th section; belongs to the type-I 3-dehydroquinase family. In the C-terminal section; belongs to the shikimate dehydrogenase family. In terms of assembly, homodimer. Zn(2+) serves as cofactor.

It is found in the cytoplasm. It catalyses the reaction 7-phospho-2-dehydro-3-deoxy-D-arabino-heptonate = 3-dehydroquinate + phosphate. It carries out the reaction 3-dehydroquinate = 3-dehydroshikimate + H2O. The catalysed reaction is shikimate + NADP(+) = 3-dehydroshikimate + NADPH + H(+). The enzyme catalyses shikimate + ATP = 3-phosphoshikimate + ADP + H(+). It catalyses the reaction 3-phosphoshikimate + phosphoenolpyruvate = 5-O-(1-carboxyvinyl)-3-phosphoshikimate + phosphate. It participates in metabolic intermediate biosynthesis; chorismate biosynthesis; chorismate from D-erythrose 4-phosphate and phosphoenolpyruvate: step 2/7. Its pathway is metabolic intermediate biosynthesis; chorismate biosynthesis; chorismate from D-erythrose 4-phosphate and phosphoenolpyruvate: step 3/7. The protein operates within metabolic intermediate biosynthesis; chorismate biosynthesis; chorismate from D-erythrose 4-phosphate and phosphoenolpyruvate: step 4/7. It functions in the pathway metabolic intermediate biosynthesis; chorismate biosynthesis; chorismate from D-erythrose 4-phosphate and phosphoenolpyruvate: step 5/7. It participates in metabolic intermediate biosynthesis; chorismate biosynthesis; chorismate from D-erythrose 4-phosphate and phosphoenolpyruvate: step 6/7. Functionally, the AROM polypeptide catalyzes 5 consecutive enzymatic reactions in prechorismate polyaromatic amino acid biosynthesis. The sequence is that of Pentafunctional AROM polypeptide from Zygosaccharomyces rouxii (strain ATCC 2623 / CBS 732 / NBRC 1130 / NCYC 568 / NRRL Y-229).